The chain runs to 859 residues: Leucine--tRNA ligase (859 aa).

Residues 42-52 (PYPSGRLHMGH) carry the 'HIGH' region motif. The short motif at 618 to 622 (KMSKS) is the 'KMSKS' region element. Residue K621 coordinates ATP.

This sequence belongs to the class-I aminoacyl-tRNA synthetase family.

The protein resides in the cytoplasm. It catalyses the reaction tRNA(Leu) + L-leucine + ATP = L-leucyl-tRNA(Leu) + AMP + diphosphate. The sequence is that of Leucine--tRNA ligase from Shewanella sp. (strain MR-7).